The following is an 820-amino-acid chain: Probable beta-glucosidase ARB_05654 (820 aa).

The N-terminal stretch at 1 to 18 is a signal peptide; sequence MLFRWCPLVALAIASGTA. Asn-62 and Asn-276 each carry an N-linked (GlcNAc...) asparagine glycan. Residue Asp-304 is part of the active site. Asn-339, Asn-346, Asn-465, Asn-547, Asn-566, Asn-588, and Asn-811 each carry an N-linked (GlcNAc...) asparagine glycan.

The protein belongs to the glycosyl hydrolase 3 family.

The protein localises to the secreted. It catalyses the reaction Hydrolysis of terminal, non-reducing beta-D-glucosyl residues with release of beta-D-glucose.. The protein operates within glycan metabolism; cellulose degradation. Its function is as follows. Beta-glucosidases are one of a number of cellulolytic enzymes involved in the degradation of cellulosic biomass. Catalyzes the last step releasing glucose from the inhibitory cellobiose. The polypeptide is Probable beta-glucosidase ARB_05654 (Arthroderma benhamiae (strain ATCC MYA-4681 / CBS 112371) (Trichophyton mentagrophytes)).